Reading from the N-terminus, the 542-residue chain is Chaperonin GroEL 2 (542 aa).

ATP is bound by residues 30–33, lysine 51, 87–91, glycine 415, and aspartate 496; these read TLGP and DGTTT.

This sequence belongs to the chaperonin (HSP60) family. Forms a cylinder of 14 subunits composed of two heptameric rings stacked back-to-back. Interacts with the co-chaperonin GroES.

The protein localises to the cytoplasm. The enzyme catalyses ATP + H2O + a folded polypeptide = ADP + phosphate + an unfolded polypeptide.. In terms of biological role, together with its co-chaperonin GroES, plays an essential role in assisting protein folding. The GroEL-GroES system forms a nano-cage that allows encapsulation of the non-native substrate proteins and provides a physical environment optimized to promote and accelerate protein folding. The sequence is that of Chaperonin GroEL 2 from Rhizobium leguminosarum.